A 183-amino-acid polypeptide reads, in one-letter code: MLLEQGWLVGARRVPSPHYDCRPDDETPTLLVVHNISLPPGEFGGPWIDALFTGTIDPQAHPFFAEIAHLRVSAHCLIRRDGEIVQYVPFDKRAWHAGVSQYQGRERCNDFSIGIELEGTDTLAYTDAQYQQLAAVTRALIDCYPDIAKNMTGHCDIAPDRKTDPGPAFDWARFRVLVSKETT.

The 138-residue stretch at 30–167 (LLVVHNISLP…APDRKTDPGP (138 aa)) folds into the N-acetylmuramoyl-L-alanine amidase domain. Histidine 34 is a binding site for Zn(2+). The active-site Proton acceptor is the glutamate 116. Zn(2+) contacts are provided by histidine 154 and aspartate 164.

This sequence belongs to the N-acetylmuramoyl-L-alanine amidase 2 family. The cofactor is Zn(2+).

It is found in the cytoplasm. It carries out the reaction Hydrolyzes the link between N-acetylmuramoyl residues and L-amino acid residues in certain cell-wall glycopeptides.. Functionally, involved in cell wall peptidoglycan recycling. Specifically cleaves the amide bond between the lactyl group of N-acetylmuramic acid and the alpha-amino group of the L-alanine in degradation products containing an anhydro N-acetylmuramyl moiety. Is also involved in beta-lactamase induction. This is 1,6-anhydro-N-acetylmuramyl-L-alanine amidase AmpD (ampD) from Escherichia coli (strain K12).